A 222-amino-acid chain; its full sequence is V-type ATP synthase subunit D (222 aa).

This sequence belongs to the V-ATPase D subunit family.

In terms of biological role, produces ATP from ADP in the presence of a proton gradient across the membrane. The chain is V-type ATP synthase subunit D from Deinococcus geothermalis (strain DSM 11300 / CIP 105573 / AG-3a).